Reading from the N-terminus, the 251-residue chain is uncharacterized protein (251 aa).

It belongs to the FAM243 family.

This is an uncharacterized protein from Mus musculus (Mouse).